The following is a 139-amino-acid chain: Protein LTO1 homolog (139 aa).

The protein belongs to the LTO1 family.

The sequence is that of Protein LTO1 homolog from Dictyostelium discoideum (Social amoeba).